We begin with the raw amino-acid sequence, 396 residues long: Elongation factor Tu 1 (396 aa).

The tr-type G domain occupies 10–206 (KPHVNVGTIG…QIDSYIPEPE (197 aa)). The segment at 19 to 26 (GHIDHGKT) is G1. 19–26 (GHIDHGKT) is a binding site for GTP. Thr26 contacts Mg(2+). The segment at 60–64 (GITIA) is G2. The segment at 81 to 84 (DCPG) is G3. GTP-binding positions include 81 to 85 (DCPGH) and 136 to 139 (NKCD). A G4 region spans residues 136 to 139 (NKCD). The tract at residues 174 to 176 (SAL) is G5.

This sequence belongs to the TRAFAC class translation factor GTPase superfamily. Classic translation factor GTPase family. EF-Tu/EF-1A subfamily. In terms of assembly, monomer.

The protein resides in the cytoplasm. The catalysed reaction is GTP + H2O = GDP + phosphate + H(+). In terms of biological role, GTP hydrolase that promotes the GTP-dependent binding of aminoacyl-tRNA to the A-site of ribosomes during protein biosynthesis. This chain is Elongation factor Tu 1, found in Desulfotalea psychrophila (strain LSv54 / DSM 12343).